Here is a 680-residue protein sequence, read N- to C-terminus: Multidrug resistance protein MdtO (680 aa).

The next 9 membrane-spanning stretches (helical) occupy residues 43–63 (VILISMTFEIPFVALSLAVLF), 75–95 (FVAILFVVATVLEIGSLFLIY), 100–120 (GEPLIRLIIAGPILMGCMFLM), 125–145 (LGLVFFAVAIYGQTFPAMLDY), 155–175 (WCIVVGLYPTLLMTLIGVLWF), 399–419 (FGGAFCGAILALLFTLLVMPW), 423–443 (IVELLFVLAPIFLLGAWIATS), 454–474 (MVVTFALATLENVFGPVYDLV), and 480–500 (ALGIIIGTVVSAMIYTFVWPE).

This sequence belongs to the MdtO family. Could be part of a tripartite efflux system composed of MdtN, MdtO and MdtP.

It localises to the cell inner membrane. Its function is as follows. Could be involved in resistance to puromycin, acriflavine and tetraphenylarsonium chloride. In Shigella flexneri, this protein is Multidrug resistance protein MdtO (mdtO).